The chain runs to 201 residues: Large ribosomal subunit protein uL4 (201 aa).

The tract at residues 46 to 71 (QKTRAEITGSGKKPWRQKGTGRARSG) is disordered.

The protein belongs to the universal ribosomal protein uL4 family. In terms of assembly, part of the 50S ribosomal subunit.

In terms of biological role, one of the primary rRNA binding proteins, this protein initially binds near the 5'-end of the 23S rRNA. It is important during the early stages of 50S assembly. It makes multiple contacts with different domains of the 23S rRNA in the assembled 50S subunit and ribosome. Its function is as follows. Forms part of the polypeptide exit tunnel. The chain is Large ribosomal subunit protein uL4 from Klebsiella pneumoniae (strain 342).